The sequence spans 487 residues: Cysteine--tRNA ligase (487 aa).

Position 27 (cysteine 27) interacts with Zn(2+). Positions 29 to 39 (ATVQGLPHVGH) match the 'HIGH' region motif. The segment at 174-194 (IDDMQGAPDADPRGKKDPRDF) is disordered. Basic and acidic residues predominate over residues 183 to 194 (ADPRGKKDPRDF). 3 residues coordinate Zn(2+): cysteine 225, histidine 250, and glutamate 254. A 'KMSKS' region motif is present at residues 281-285 (KMSKS). Residue lysine 284 participates in ATP binding.

The protein belongs to the class-I aminoacyl-tRNA synthetase family. Monomer. Requires Zn(2+) as cofactor.

It is found in the cytoplasm. It carries out the reaction tRNA(Cys) + L-cysteine + ATP = L-cysteinyl-tRNA(Cys) + AMP + diphosphate. The polypeptide is Cysteine--tRNA ligase (Arthrobacter sp. (strain FB24)).